A 354-amino-acid polypeptide reads, in one-letter code: Uroporphyrinogen decarboxylase (354 aa).

Substrate is bound by residues 27–31, Asp77, Tyr154, Ser209, and His327; that span reads RQAGR.

This sequence belongs to the uroporphyrinogen decarboxylase family. Homodimer.

It is found in the cytoplasm. The catalysed reaction is uroporphyrinogen III + 4 H(+) = coproporphyrinogen III + 4 CO2. It participates in porphyrin-containing compound metabolism; protoporphyrin-IX biosynthesis; coproporphyrinogen-III from 5-aminolevulinate: step 4/4. In terms of biological role, catalyzes the decarboxylation of four acetate groups of uroporphyrinogen-III to yield coproporphyrinogen-III. This chain is Uroporphyrinogen decarboxylase, found in Shewanella putrefaciens (strain CN-32 / ATCC BAA-453).